The chain runs to 409 residues: Ribose-phosphate pyrophosphokinase 3, chloroplastic (409 aa).

2 stretches are compositionally biased toward low complexity: residues 1 to 16 (MATAASASASASPAAA) and 34 to 43 (PASAFARPSP). The segment at 1-43 (MATAASASASASPAAAFGAKTRRPGPSPSPSPSPASAFARPSP) is disordered. The transit peptide at 1–44 (MATAASASASASPAAAFGAKTRRPGPSPSPSPSPASAFARPSPR) directs the protein to the chloroplast. Residues Asp229 and His231 each contribute to the Mg(2+) site. Positions 312–327 (GRHVVIVDDLVQSGGT) are binding of phosphoribosylpyrophosphate.

This sequence belongs to the ribose-phosphate pyrophosphokinase family. Mg(2+) is required as a cofactor.

The protein localises to the plastid. The protein resides in the chloroplast. The catalysed reaction is D-ribose 5-phosphate + ATP = 5-phospho-alpha-D-ribose 1-diphosphate + AMP + H(+). This Oryza sativa subsp. japonica (Rice) protein is Ribose-phosphate pyrophosphokinase 3, chloroplastic.